The sequence spans 118 residues: MIVGHGIDLQEISAIEKVYQRNPRFAQKILTEQELAIFESFPYKRRLSYLAGRWAGKEAFAKAIGTGIGRLTFQDIEILNDVRGCPILTKSPFKGNSFISISHSGNYVQASVILEDKK.

Residues aspartate 8 and glutamate 58 each coordinate Mg(2+).

This sequence belongs to the P-Pant transferase superfamily. AcpS family. Mg(2+) is required as a cofactor.

The protein localises to the cytoplasm. It catalyses the reaction apo-[ACP] + CoA = holo-[ACP] + adenosine 3',5'-bisphosphate + H(+). Transfers the 4'-phosphopantetheine moiety from coenzyme A to a Ser of acyl-carrier-protein. This chain is Holo-[acyl-carrier-protein] synthase, found in Streptococcus pyogenes serotype M28 (strain MGAS6180).